A 444-amino-acid chain; its full sequence is Glutamyl-tRNA reductase (444 aa).

Substrate-binding positions include 41-44 (TCNR), S102, 107-109 (ERE), and Q113. Residue C42 is the Nucleophile of the active site. 181-186 (GTGSYA) serves as a coordination point for NADP(+).

This sequence belongs to the glutamyl-tRNA reductase family. As to quaternary structure, homodimer.

The enzyme catalyses (S)-4-amino-5-oxopentanoate + tRNA(Glu) + NADP(+) = L-glutamyl-tRNA(Glu) + NADPH + H(+). It participates in porphyrin-containing compound metabolism; protoporphyrin-IX biosynthesis; 5-aminolevulinate from L-glutamyl-tRNA(Glu): step 1/2. In terms of biological role, catalyzes the NADPH-dependent reduction of glutamyl-tRNA(Glu) to glutamate 1-semialdehyde (GSA). The chain is Glutamyl-tRNA reductase from Cutibacterium acnes (strain DSM 16379 / KPA171202) (Propionibacterium acnes).